A 269-amino-acid chain; its full sequence is Interleukin-1 beta (269 aa).

A propeptide spanning residues 1 to 117 (MATVPELNCE…DDDDNLLVCD (117 aa)) is cleaved from the precursor.

It belongs to the IL-1 family. As to quaternary structure, monomer. Interacts with MEFV. Interacts with integrins ITGAV:ITGBV and ITGA5:ITGB1; integrin-binding is required for IL1B signaling. Interacts with cargo receptor TMED10; the interaction is direct and is required for the secretion of IL1B mature form. Interacts with HSP90AB1; the interaction facilitates cargo translocation into the ERGIC. Interacts with HSP90B1; the interaction facilitates cargo translocation into the ERGIC. Expressed in activated macrophages (at protein level).

Its subcellular location is the cytoplasm. It is found in the cytosol. The protein localises to the secreted. It localises to the lysosome. The protein resides in the extracellular exosome. Its function is as follows. Potent pro-inflammatory cytokine. Initially discovered as the major endogenous pyrogen, induces prostaglandin synthesis, neutrophil influx and activation, T-cell activation and cytokine production, B-cell activation and antibody production, and fibroblast proliferation and collagen production. Promotes Th17 differentiation of T-cells. Synergizes with IL12/interleukin-12 to induce IFNG synthesis from T-helper 1 (Th1) cells. Plays a role in angiogenesis by inducing VEGF production synergistically with TNF and IL6. Involved in transduction of inflammation downstream of pyroptosis: its mature form is specifically released in the extracellular milieu by passing through the gasdermin-D (GSDMD) pore. This is Interleukin-1 beta (Il1b) from Mus musculus (Mouse).